Consider the following 116-residue polypeptide: Urease subunit beta (116 aa).

A disordered region spans residues 97 to 116; that stretch reads IQGPLDAGTAETAPGLPQQP.

Belongs to the urease beta subunit family. Heterotrimer of UreA (gamma), UreB (beta) and UreC (alpha) subunits. Three heterotrimers associate to form the active enzyme.

The protein resides in the cytoplasm. The catalysed reaction is urea + 2 H2O + H(+) = hydrogencarbonate + 2 NH4(+). It participates in nitrogen metabolism; urea degradation; CO(2) and NH(3) from urea (urease route): step 1/1. This is Urease subunit beta from Paracidovorax citrulli (strain AAC00-1) (Acidovorax citrulli).